Consider the following 82-residue polypeptide: Large ribosomal subunit protein bL31B (82 aa).

The protein belongs to the bacterial ribosomal protein bL31 family. Type B subfamily. Part of the 50S ribosomal subunit.

The polypeptide is Large ribosomal subunit protein bL31B (Amoebophilus asiaticus (strain 5a2)).